The chain runs to 193 residues: MIKPLKSSRTGLLAGVFDPVHIGHLFMAHLAMEAANLDRVWFVPTHIPPHKDSAKVPYFHRVNMLEMALKEEPKFVLMELEREARPTYSYETILSVKHVLGEKPYFILGSDEWEELHNWRRYDLLVKNAIFIVVPRKPITVARPEAEAIFTDMTPINVSSTYIRQRVAKGKPITYLVPKTVETYIHENHLYYP.

Belongs to the NadD family.

It carries out the reaction nicotinate beta-D-ribonucleotide + ATP + H(+) = deamido-NAD(+) + diphosphate. Its pathway is cofactor biosynthesis; NAD(+) biosynthesis; deamido-NAD(+) from nicotinate D-ribonucleotide: step 1/1. Its function is as follows. Catalyzes the reversible adenylation of nicotinate mononucleotide (NaMN) to nicotinic acid adenine dinucleotide (NaAD). The chain is Probable nicotinate-nucleotide adenylyltransferase from Coprothermobacter proteolyticus (strain ATCC 35245 / DSM 5265 / OCM 4 / BT).